The sequence spans 263 residues: Phosphonoacetaldehyde hydrolase (263 aa).

The Nucleophile role is filled by D10. 2 residues coordinate Mg(2+): D10 and A12. The active-site Schiff-base intermediate with substrate is the K51. D184 contacts Mg(2+).

The protein belongs to the HAD-like hydrolase superfamily. PhnX family. As to quaternary structure, homodimer. It depends on Mg(2+) as a cofactor.

The catalysed reaction is phosphonoacetaldehyde + H2O = acetaldehyde + phosphate + H(+). In terms of biological role, involved in phosphonate degradation. In Bacteroides fragilis (strain ATCC 25285 / DSM 2151 / CCUG 4856 / JCM 11019 / LMG 10263 / NCTC 9343 / Onslow / VPI 2553 / EN-2), this protein is Phosphonoacetaldehyde hydrolase.